The chain runs to 39 residues: Natriuretic peptide CnNP-b (39 aa).

Residues 1–8 (SGSKTATK) constitute a propeptide that is removed on maturation. A disulfide bridge connects residues Cys12 and Cys28. A disordered region spans residues 20 to 39 (IGSTSGMGCGGVPKPTPGGS).

Belongs to the natriuretic peptide family. In terms of tissue distribution, expressed by the venom gland.

It localises to the secreted. Snake venom natriuretic peptide that targets both NPR1 and NPR2. Exhibits hypotensive and vasodepressor activities. The polypeptide is Natriuretic peptide CnNP-b (Cryptophis nigrescens (Eastern small-eyed snake)).